An 87-amino-acid polypeptide reads, in one-letter code: MLVLLVAVLVTAVYAFVHAALQRPDAYTAADKLTKPVWLVILGAAVALASILYPVLGVLGMAMSACASGVYLVDVRPKLLEIQGKSR.

The first 19 residues, 1 to 19, serve as a signal peptide directing secretion; it reads MLVLLVAVLVTAVYAFVHA. The helical transmembrane segment at 39 to 59 threads the bilayer; that stretch reads LVILGAAVALASILYPVLGVL.

To M.leprae ML2453.

The protein localises to the membrane. This is an uncharacterized protein from Mycobacterium bovis (strain ATCC BAA-935 / AF2122/97).